The chain runs to 36 residues: Lambda-hexatoxin-Hv1a (36 aa).

4 cysteine pairs are disulfide-bonded: cysteine 3–cysteine 17, cysteine 10–cysteine 22, cysteine 13–cysteine 14, and cysteine 16–cysteine 33.

The protein belongs to the neurotoxin 11 (kappa toxin) family. Expressed by the venom gland.

It is found in the secreted. Functionally, this excitatory toxin inhibits insect calcium-activated potassium (KCa) channels (Slo-type). This chain is Lambda-hexatoxin-Hv1a, found in Hadronyche versuta (Blue mountains funnel-web spider).